A 626-amino-acid polypeptide reads, in one-letter code: ATP-dependent rRNA helicase spb4 (626 aa).

A Q motif motif is present at residues 14 to 42; the sequence is WDALTPSLAEWVLDAISSMGFEKMTPVQA. In terms of domain architecture, Helicase ATP-binding spans 45 to 246; the sequence is IPLFMGNKDV…RVGLRNPVKI (202 aa). 58–65 serves as a coordination point for ATP; that stretch reads AVTGSGKT. Positions 194–197 match the DEAD box motif; it reads DEAD. The Helicase C-terminal domain maps to 279-437; sequence ALLSLLSQLE…TTGEAAKILI (159 aa). A disordered region spans residues 553-599; the sequence is QREAWSQKHEKQDLKELKREKKKRKREIERLEKMTDEEKKEEQAKEK. 2 stretches are compositionally biased toward basic and acidic residues: residues 554-571 and 578-599; these read REAW…ELKR and REIE…AKEK. The stretch at 558–620 forms a coiled coil; sequence SQKHEKQDLK…RKIEDDADVE (63 aa).

This sequence belongs to the DEAD box helicase family. DDX55/SPB4 subfamily. Component of pre-60S ribosomal complexes.

It is found in the nucleus. The protein localises to the nucleolus. It catalyses the reaction ATP + H2O = ADP + phosphate + H(+). In terms of biological role, ATP-binding RNA helicase involved in the biogenesis of 60S ribosomal subunits. Binds 90S pre-ribosomal particles and dissociates from pre-60S ribosomal particles after processing of 27SB pre-rRNA. Required for the normal formation of 18S rRNA through the processing of pre-rRNAs at sites A0, A1 and A2, and the normal formation of 25S and 5.8S rRNAs through the processing of pre-rRNAs at sites C1 and C2. The chain is ATP-dependent rRNA helicase spb4 from Botryotinia fuckeliana (strain B05.10) (Noble rot fungus).